Reading from the N-terminus, the 354-residue chain is MTATLERRENASLWGNFCDWITSTENRLYIGWFGVLMIPTLLTATSVFITAFIAAPPVDIDGIREPVSGSLLYGNNIISGAIIPTSAAIGLHFYPIWEAASIDEWLYNGGPYELIVLHFLLGVACYMGREWELSFRLGMRPWIAVAYSAPVAAATAVFLIYPIGQGSFSDGMPLGISGTFNFMIVFQAEHNILMHPFHMLGVAGVFGGSLFSAMHGSLVTSSLIRETTENESANAGYRFGQEEETYNIVAAHGYFGRLIFQYASFNNSRSLHFFLAAWPVVGIWFTALGISTMAFNLNGFNFNQSVVDSQGRVINTWADIINRANLGMEVMHERNAHNFPLDLAASIEAPSLNG.

The residue at position 2 (threonine 2) is an N-acetylthreonine. Phosphothreonine is present on threonine 2. 3 consecutive transmembrane segments (helical) span residues 29-46 (YIGWFGVLMIPTLLTATS), 118-133 (HFLLGVACYMGREWEL), and 142-156 (WIAVAYSAPVAAATA). Histidine 118 is a binding site for chlorophyll a. A pheophytin a-binding site is contributed by tyrosine 126. [CaMn4O5] cluster contacts are provided by aspartate 170 and glutamate 189. The chain crosses the membrane as a helical span at residues 197 to 218 (FHMLGVAGVFGGSLFSAMHGSL). Histidine 198 lines the chlorophyll a pocket. A quinone contacts are provided by residues histidine 215 and 264–265 (SF). Fe cation is bound at residue histidine 215. Position 272 (histidine 272) interacts with Fe cation. Residues 274–288 (FLAAWPVVGIWFTAL) traverse the membrane as a helical segment. 4 residues coordinate [CaMn4O5] cluster: histidine 332, glutamate 333, aspartate 342, and alanine 344. A propeptide spanning residues 345-354 (ASIEAPSLNG) is cleaved from the precursor.

This sequence belongs to the reaction center PufL/M/PsbA/D family. In terms of assembly, PSII is composed of 1 copy each of membrane proteins PsbA, PsbB, PsbC, PsbD, PsbE, PsbF, PsbH, PsbI, PsbJ, PsbK, PsbL, PsbM, PsbT, PsbX, PsbY, PsbZ, Psb30/Ycf12, at least 3 peripheral proteins of the oxygen-evolving complex and a large number of cofactors. It forms dimeric complexes. The cofactor is The D1/D2 heterodimer binds P680, chlorophylls that are the primary electron donor of PSII, and subsequent electron acceptors. It shares a non-heme iron and each subunit binds pheophytin, quinone, additional chlorophylls, carotenoids and lipids. D1 provides most of the ligands for the Mn4-Ca-O5 cluster of the oxygen-evolving complex (OEC). There is also a Cl(-1) ion associated with D1 and D2, which is required for oxygen evolution. The PSII complex binds additional chlorophylls, carotenoids and specific lipids.. In terms of processing, tyr-161 forms a radical intermediate that is referred to as redox-active TyrZ, YZ or Y-Z. C-terminally processed by CTPA; processing is essential to allow assembly of the oxygen-evolving complex and thus photosynthetic growth.

Its subcellular location is the plastid. The protein localises to the chloroplast thylakoid membrane. It catalyses the reaction 2 a plastoquinone + 4 hnu + 2 H2O = 2 a plastoquinol + O2. Photosystem II (PSII) is a light-driven water:plastoquinone oxidoreductase that uses light energy to abstract electrons from H(2)O, generating O(2) and a proton gradient subsequently used for ATP formation. It consists of a core antenna complex that captures photons, and an electron transfer chain that converts photonic excitation into a charge separation. The D1/D2 (PsbA/PsbD) reaction center heterodimer binds P680, the primary electron donor of PSII as well as several subsequent electron acceptors. The protein is Photosystem II protein D1 of Selaginella uncinata (Blue spike-moss).